A 62-amino-acid chain; its full sequence is Bowman-Birk type proteinase inhibitor B7 (62 aa).

Cystine bridges form between cysteine 5/cysteine 59, cysteine 6/cysteine 23, cysteine 13/cysteine 21, cysteine 30/cysteine 37, and cysteine 34/cysteine 51.

It belongs to the Bowman-Birk serine protease inhibitor family. Expressed in bulb (at protein level).

In terms of biological role, serine protease inhibitor. Inhibits trypsin (Ki = 65 nM) and weakly inhibits chymotrypsin (Ki = 295 nM). Does not inhibit bacterial subtilisin. The polypeptide is Bowman-Birk type proteinase inhibitor B7 (Hyacinthus orientalis (Common hyacinth)).